The following is a 607-amino-acid chain: 2-isopropylmalate synthase (607 aa).

The segment covering 1-10 has biased composition (polar residues); that stretch reads MASFSESLSQ. The tract at residues 1 to 40 is disordered; that stretch reads MASFSESLSQDPADAYKSAPSITKPMGPPSPGQPQWNPQR. The 275-residue stretch at 75 to 349 folds into the Pyruvate carboxyltransferase domain; sequence PLWCAVDLRD…DPQIDFSNID (275 aa). Mg(2+)-binding residues include Asp-84, His-288, His-290, and Asn-324. Residues 491–607 are regulatory domain; it reads PVQPLERIKQ…VSAVNRAMPR (117 aa).

Belongs to the alpha-IPM synthase/homocitrate synthase family. LeuA type 2 subfamily. Homodimer. It depends on Mg(2+) as a cofactor.

It localises to the cytoplasm. It carries out the reaction 3-methyl-2-oxobutanoate + acetyl-CoA + H2O = (2S)-2-isopropylmalate + CoA + H(+). The protein operates within amino-acid biosynthesis; L-leucine biosynthesis; L-leucine from 3-methyl-2-oxobutanoate: step 1/4. Catalyzes the condensation of the acetyl group of acetyl-CoA with 3-methyl-2-oxobutanoate (2-ketoisovalerate) to form 3-carboxy-3-hydroxy-4-methylpentanoate (2-isopropylmalate). In Mycobacterium leprae (strain TN), this protein is 2-isopropylmalate synthase.